Reading from the N-terminus, the 219-residue chain is Uracil-DNA glycosylase (219 aa).

D59 acts as the Proton acceptor in catalysis.

Belongs to the uracil-DNA glycosylase (UDG) superfamily. UNG family.

It is found in the cytoplasm. The catalysed reaction is Hydrolyzes single-stranded DNA or mismatched double-stranded DNA and polynucleotides, releasing free uracil.. Functionally, excises uracil residues from the DNA which can arise as a result of misincorporation of dUMP residues by DNA polymerase or due to deamination of cytosine. In Macrococcus caseolyticus (strain JCSC5402) (Macrococcoides caseolyticum), this protein is Uracil-DNA glycosylase.